Reading from the N-terminus, the 29-residue chain is Cyclotide mela-3 (29 aa).

The cyclopeptide (Gly-Asp) cross-link spans 1–29 (GKPICGETCFKGKCYTPGCTCSYPICKKD). 3 disulfide bridges follow: Cys5–Cys19, Cys9–Cys21, and Cys14–Cys26.

In terms of processing, this is a cyclic peptide. Post-translationally, contains 3 disulfide bonds.

In terms of biological role, probably participates in a plant defense mechanism (Potential). Binds to and induces leakage in phospholipd membranes, particularly ones containing 1-palmitoyl-2-oleophosphatidylethanolamine (POPE). In vitro, displays cytotoxicity against cultured cells. Not active against Gram-negative bacterium E.coli ATCC 25922 or Gram-positive bacterium S.aureus ATCC 25923 up to a concentration of 64 uM. The sequence is that of Cyclotide mela-3 from Melicytus latifolius (Norfolk Island mahoe).